We begin with the raw amino-acid sequence, 476 residues long: Argininosuccinate lyase (476 aa).

Low complexity predominate over residues 1 to 17 (MTDTGSSDTNTDTTGTS). The tract at residues 1–22 (MTDTGSSDTNTDTTGTSKANTM) is disordered.

The protein belongs to the lyase 1 family. Argininosuccinate lyase subfamily.

The protein resides in the cytoplasm. It carries out the reaction 2-(N(omega)-L-arginino)succinate = fumarate + L-arginine. It participates in amino-acid biosynthesis; L-arginine biosynthesis; L-arginine from L-ornithine and carbamoyl phosphate: step 3/3. In Jannaschia sp. (strain CCS1), this protein is Argininosuccinate lyase.